The sequence spans 83 residues: Cytochrome c oxidase subunit 7A2, mitochondrial (83 aa).

The N-terminal 23 residues, 1–23, are a transit peptide targeting the mitochondrion; sequence MLRNLLALRQIAQRTISTTSRRH. Residues 24–48 are Mitochondrial matrix-facing; sequence FENKVPEKQKLFQEDNGMPVHLKGG. At Lys33 the chain carries N6-acetyllysine. The chain crosses the membrane as a helical span at residues 49–77; sequence ASDALLYRATMALTLGGTAYAIYLLAMAA. Topologically, residues 78 to 83 are mitochondrial intermembrane; the sequence is FPKKQN.

Belongs to the cytochrome c oxidase VIIa family. Component of the cytochrome c oxidase (complex IV, CIV), a multisubunit enzyme composed of 14 subunits. The complex is composed of a catalytic core of 3 subunits MT-CO1, MT-CO2 and MT-CO3, encoded in the mitochondrial DNA, and 11 supernumerary subunits COX4I, COX5A, COX5B, COX6A, COX6B, COX6C, COX7A, COX7B, COX7C, COX8 and NDUFA4, which are encoded in the nuclear genome. The complex exists as a monomer or a dimer and forms supercomplexes (SCs) in the inner mitochondrial membrane with NADH-ubiquinone oxidoreductase (complex I, CI) and ubiquinol-cytochrome c oxidoreductase (cytochrome b-c1 complex, complex III, CIII), resulting in different assemblies (supercomplex SCI(1)III(2)IV(1) and megacomplex MCI(2)III(2)IV(2)). Interacts with PET100.

The protein localises to the mitochondrion inner membrane. It functions in the pathway energy metabolism; oxidative phosphorylation. Component of the cytochrome c oxidase, the last enzyme in the mitochondrial electron transport chain which drives oxidative phosphorylation. The respiratory chain contains 3 multisubunit complexes succinate dehydrogenase (complex II, CII), ubiquinol-cytochrome c oxidoreductase (cytochrome b-c1 complex, complex III, CIII) and cytochrome c oxidase (complex IV, CIV), that cooperate to transfer electrons derived from NADH and succinate to molecular oxygen, creating an electrochemical gradient over the inner membrane that drives transmembrane transport and the ATP synthase. Cytochrome c oxidase is the component of the respiratory chain that catalyzes the reduction of oxygen to water. Electrons originating from reduced cytochrome c in the intermembrane space (IMS) are transferred via the dinuclear copper A center (CU(A)) of subunit 2 and heme A of subunit 1 to the active site in subunit 1, a binuclear center (BNC) formed by heme A3 and copper B (CU(B)). The BNC reduces molecular oxygen to 2 water molecules using 4 electrons from cytochrome c in the IMS and 4 protons from the mitochondrial matrix. This Mus musculus (Mouse) protein is Cytochrome c oxidase subunit 7A2, mitochondrial (Cox7a2).